A 314-amino-acid polypeptide reads, in one-letter code: Olfactory receptor-like protein I9 (314 aa).

Residues 1 to 25 (MTRRNQTAISQFFLLGLPFPPEYQH) lie on the Extracellular side of the membrane. An N-linked (GlcNAc...) asparagine glycan is attached at Asn-5. The chain crosses the membrane as a helical span at residues 26 to 50 (LFYALFLAMYLTTLLGNLIIIILIL). Residues 51 to 57 (LDSHLHT) are Cytoplasmic-facing. A helical membrane pass occupies residues 58–79 (PMYLFLSNLSFADLCFSSVTMP). Topologically, residues 80–100 (KLLQNMQSQVPSIPYAGCLAQ) are extracellular. A disulfide bridge connects residues Cys-97 and Cys-189. The chain crosses the membrane as a helical span at residues 101–120 (IYFFLFFGDLGNFLLVAMAY). The Cytoplasmic segment spans residues 121–139 (DRYVAICFPLHYMSIMSPK). A helical transmembrane segment spans residues 140–158 (LCVSLVVLSWVLTTFHAML). Residues 159 to 196 (HTLLMARLSFCEDSVIPHYFCDMSTLLKVACSDTHDNE) are Extracellular-facing. A helical transmembrane segment spans residues 197–219 (LAIFILGGPIVVLPFLLIIVSYA). Over 220 to 236 (RIVSSIFKVPSSQSIHK) the chain is Cytoplasmic. A helical membrane pass occupies residues 237-260 (AFSTCGSHLSVVSLFYGTVIGLYL). At 261-272 (CPSANNSTVKET) the chain is on the extracellular side. The helical transmembrane segment at 273–292 (VMSLMYTMVTPMLNPFIYSL) threads the bilayer. Residues 293–314 (RNRDIKDALEKIMCKKQIPSFL) lie on the Cytoplasmic side of the membrane.

This sequence belongs to the G-protein coupled receptor 1 family. Olfactory epithelium.

It is found in the cell membrane. In terms of biological role, odorant receptor. This chain is Olfactory receptor-like protein I9, found in Rattus norvegicus (Rat).